We begin with the raw amino-acid sequence, 278 residues long: Shikimate dehydrogenase (NADP(+)) (278 aa).

Shikimate contacts are provided by residues 19 to 21 (SRS) and Thr66. Lys70 functions as the Proton acceptor in the catalytic mechanism. Positions 91 and 106 each coordinate shikimate. NADP(+)-binding positions include 129 to 133 (GAGGA) and Phe221. Shikimate is bound at residue Tyr223. Position 242 (Gly242) interacts with NADP(+).

It belongs to the shikimate dehydrogenase family. As to quaternary structure, homodimer.

The catalysed reaction is shikimate + NADP(+) = 3-dehydroshikimate + NADPH + H(+). It participates in metabolic intermediate biosynthesis; chorismate biosynthesis; chorismate from D-erythrose 4-phosphate and phosphoenolpyruvate: step 4/7. Functionally, involved in the biosynthesis of the chorismate, which leads to the biosynthesis of aromatic amino acids. Catalyzes the reversible NADPH linked reduction of 3-dehydroshikimate (DHSA) to yield shikimate (SA). The protein is Shikimate dehydrogenase (NADP(+)) of Anaeromyxobacter dehalogenans (strain 2CP-1 / ATCC BAA-258).